We begin with the raw amino-acid sequence, 426 residues long: 3-phosphoshikimate 1-carboxyvinyltransferase (426 aa).

3-phosphoshikimate is bound by residues Lys23, Ser24, and Arg28. Residue Lys23 participates in phosphoenolpyruvate binding. Phosphoenolpyruvate-binding residues include Gly96 and Arg124. 6 residues coordinate 3-phosphoshikimate: Thr170, Ser171, Gln172, Ser198, Asp314, and Lys341. Phosphoenolpyruvate is bound at residue Gln172. Catalysis depends on Asp314, which acts as the Proton acceptor. Residues Arg345, Arg386, and Lys411 each coordinate phosphoenolpyruvate.

The protein belongs to the EPSP synthase family. Monomer.

Its subcellular location is the cytoplasm. The enzyme catalyses 3-phosphoshikimate + phosphoenolpyruvate = 5-O-(1-carboxyvinyl)-3-phosphoshikimate + phosphate. The protein operates within metabolic intermediate biosynthesis; chorismate biosynthesis; chorismate from D-erythrose 4-phosphate and phosphoenolpyruvate: step 6/7. In terms of biological role, catalyzes the transfer of the enolpyruvyl moiety of phosphoenolpyruvate (PEP) to the 5-hydroxyl of shikimate-3-phosphate (S3P) to produce enolpyruvyl shikimate-3-phosphate and inorganic phosphate. The chain is 3-phosphoshikimate 1-carboxyvinyltransferase from Nostoc punctiforme (strain ATCC 29133 / PCC 73102).